The chain runs to 291 residues: Nucleotide-binding protein jk1004 (291 aa).

16-23 (GMSGAGRR) contributes to the ATP binding site. 67–70 (DVRS) is a GTP binding site.

This sequence belongs to the RapZ-like family.

Displays ATPase and GTPase activities. The chain is Nucleotide-binding protein jk1004 from Corynebacterium jeikeium (strain K411).